The sequence spans 180 residues: ATP synthase subunit delta (180 aa).

The protein belongs to the ATPase delta chain family. F-type ATPases have 2 components, F(1) - the catalytic core - and F(0) - the membrane proton channel. F(1) has five subunits: alpha(3), beta(3), gamma(1), delta(1), epsilon(1). F(0) has three main subunits: a(1), b(2) and c(10-14). The alpha and beta chains form an alternating ring which encloses part of the gamma chain. F(1) is attached to F(0) by a central stalk formed by the gamma and epsilon chains, while a peripheral stalk is formed by the delta and b chains.

It localises to the cell membrane. F(1)F(0) ATP synthase produces ATP from ADP in the presence of a proton or sodium gradient. F-type ATPases consist of two structural domains, F(1) containing the extramembraneous catalytic core and F(0) containing the membrane proton channel, linked together by a central stalk and a peripheral stalk. During catalysis, ATP synthesis in the catalytic domain of F(1) is coupled via a rotary mechanism of the central stalk subunits to proton translocation. Its function is as follows. This protein is part of the stalk that links CF(0) to CF(1). It either transmits conformational changes from CF(0) to CF(1) or is implicated in proton conduction. The protein is ATP synthase subunit delta of Enterococcus hirae (strain ATCC 9790 / DSM 20160 / JCM 8729 / LMG 6399 / NBRC 3181 / NCIMB 6459 / NCDO 1258 / NCTC 12367 / WDCM 00089 / R).